A 428-amino-acid chain; its full sequence is uncharacterized protein (428 aa).

Positions 1–49 are disordered; that stretch reads MRTQTFPPSSSSSRTTHPKKNRHSSNSSSMALVTPAKSSTGAAPKQSSQ. Residues 24 to 49 are compositionally biased toward polar residues; the sequence is SSNSSSMALVTPAKSSTGAAPKQSSQ.

This is an uncharacterized protein from Caenorhabditis elegans.